The chain runs to 1859 residues: DNA-directed RNA polymerase subunit beta'' (1859 aa).

4 residues coordinate Zn(2+): C286, C359, C366, and C369.

The protein belongs to the RNA polymerase beta' chain family. RpoC2 subfamily. In plastids the minimal PEP RNA polymerase catalytic core is composed of four subunits: alpha, beta, beta', and beta''. When a (nuclear-encoded) sigma factor is associated with the core the holoenzyme is formed, which can initiate transcription. Zn(2+) is required as a cofactor.

The protein localises to the plastid. It is found in the chloroplast. It carries out the reaction RNA(n) + a ribonucleoside 5'-triphosphate = RNA(n+1) + diphosphate. Functionally, DNA-dependent RNA polymerase catalyzes the transcription of DNA into RNA using the four ribonucleoside triphosphates as substrates. This is DNA-directed RNA polymerase subunit beta'' from Oltmannsiellopsis viridis (Marine flagellate).